The sequence spans 513 residues: Cytochrome P450 72A552 (513 aa).

The helical transmembrane segment at 2 to 22 (EISVASVTVSVVIAVVTWWVW) threads the bilayer. Position 460 (cysteine 460) interacts with heme.

The protein belongs to the cytochrome P450 family. Heme is required as a cofactor.

The protein localises to the membrane. It carries out the reaction oleanolate + reduced [NADPH--hemoprotein reductase] + O2 = hederagenin + oxidized [NADPH--hemoprotein reductase] + H2O + H(+). In terms of biological role, catalyzes the oxidation of oleanolate at the C-23 position to form hederagenin. The sequence is that of Cytochrome P450 72A552 from Barbarea vulgaris (Yellow rocket).